The sequence spans 318 residues: Acetyl-coenzyme A carboxylase carboxyl transferase subunit alpha (318 aa).

The CoA carboxyltransferase C-terminal domain occupies 32 to 293 (DLSQEIESLE…KKALQKHLGE (262 aa)).

It belongs to the AccA family. Acetyl-CoA carboxylase is a heterohexamer composed of biotin carboxyl carrier protein (AccB), biotin carboxylase (AccC) and two subunits each of ACCase subunit alpha (AccA) and ACCase subunit beta (AccD).

Its subcellular location is the cytoplasm. The catalysed reaction is N(6)-carboxybiotinyl-L-lysyl-[protein] + acetyl-CoA = N(6)-biotinyl-L-lysyl-[protein] + malonyl-CoA. Its pathway is lipid metabolism; malonyl-CoA biosynthesis; malonyl-CoA from acetyl-CoA: step 1/1. Functionally, component of the acetyl coenzyme A carboxylase (ACC) complex. First, biotin carboxylase catalyzes the carboxylation of biotin on its carrier protein (BCCP) and then the CO(2) group is transferred by the carboxyltransferase to acetyl-CoA to form malonyl-CoA. This chain is Acetyl-coenzyme A carboxylase carboxyl transferase subunit alpha, found in Syntrophomonas wolfei subsp. wolfei (strain DSM 2245B / Goettingen).